Consider the following 409-residue polypeptide: MFSVIGRGIKFSSKSHYSVSCFLIATQGAKIRQIHTHNTFFKNFSFAKLGRNQRTSSLIKIHNSSTSFPKSRSEKVVYTPSLPLSSSVLASFSFLPHNILQNGLNTLHIWSGLPWWASIAACAVAMRIAVFPIMLKMMKTSAKLAIINPKVAEHMSVLSKAKAEGNSELMMQATTQIQNLYKVNNVNPLNLLSAPVFQGILFISFFYALKTMAGVPVEGFTDGGFWWVNDLSQPDPLHIFPVANGLLMLLNIELGSETGSNKVAMSPSMKKFFRFLCLASPLFTMNFPMAIFMYWFPSNVFSVFQGAFLRSSTIRHKLGLPEVPSAMPVPNAQNESFVKSFTDIVHGVQEKGKYPQASEILDATRFLKTDTNNEQKPTNNSTITKATTLSDNSQNDKSSSVTKPTEKKD.

Residues 76-96 form a helical membrane-spanning segment; it reads VVYTPSLPLSSSVLASFSFLP. Topologically, residues 97-114 are mitochondrial intermembrane; that stretch reads HNILQNGLNTLHIWSGLP. A helical transmembrane segment spans residues 115–135; the sequence is WWASIAACAVAMRIAVFPIML. The Mitochondrial matrix segment spans residues 136 to 188; it reads KMMKTSAKLAIINPKVAEHMSVLSKAKAEGNSELMMQATTQIQNLYKVNNVNP. A helical transmembrane segment spans residues 189 to 209; it reads LNLLSAPVFQGILFISFFYAL. Residues 210 to 235 lie on the Mitochondrial intermembrane side of the membrane; sequence KTMAGVPVEGFTDGGFWWVNDLSQPD. The chain crosses the membrane as a helical span at residues 236–256; that stretch reads PLHIFPVANGLLMLLNIELGS. Residues 257–275 lie on the Mitochondrial matrix side of the membrane; that stretch reads ETGSNKVAMSPSMKKFFRF. The chain crosses the membrane as a helical span at residues 276–296; sequence LCLASPLFTMNFPMAIFMYWF. Residues 297 to 409 lie on the Mitochondrial intermembrane side of the membrane; the sequence is PSNVFSVFQG…SVTKPTEKKD (113 aa). The segment at 369–409 is disordered; it reads TDTNNEQKPTNNSTITKATTLSDNSQNDKSSSVTKPTEKKD. Over residues 374–403 the composition is skewed to polar residues; it reads EQKPTNNSTITKATTLSDNSQNDKSSSVTK.

The protein belongs to the OXA1/ALB3/YidC family.

The protein resides in the mitochondrion inner membrane. Its function is as follows. Required for the insertion of integral membrane proteins into the mitochondrial inner membrane. Essential for the activity and assembly of cytochrome c oxidase. It is essential for viability while oxa101 is not. When both are deleted the cell is non-viable, suggesting that oxa101 act as a back-up for oxa102. In Schizosaccharomyces pombe (strain 972 / ATCC 24843) (Fission yeast), this protein is Mitochondrial inner membrane protein oxa1-2 (oxa102).